The sequence spans 544 residues: Probable protein kinase UbiB (544 aa).

A helical membrane pass occupies residues 1–21 (MIFGELRRLYLIIGVMLSYGL). The Protein kinase domain maps to 123-500 (DFQQEPLASA…HVRQSQSRFL (378 aa)). ATP is bound by residues 129 to 137 (LASASIAQV) and Lys-151. Asp-286 acts as the Proton acceptor in catalysis. The next 2 helical transmembrane spans lie at 499–519 (FLFGIGATLLLIGTFLMTQGA) and 520–540 (DEGSLPAWLMAAGTVSWIIGW).

It belongs to the ABC1 family. UbiB subfamily.

The protein resides in the cell inner membrane. The protein operates within cofactor biosynthesis; ubiquinone biosynthesis [regulation]. Functionally, is probably a protein kinase regulator of UbiI activity which is involved in aerobic coenzyme Q (ubiquinone) biosynthesis. This is Probable protein kinase UbiB from Sodalis glossinidius (strain morsitans).